The sequence spans 413 residues: Histidine decarboxylase (413 aa).

A substrate-binding site is contributed by H129. An N6-(pyridoxal phosphate)lysine modification is found at K242.

This sequence belongs to the group II decarboxylase family. Pyridoxal 5'-phosphate is required as a cofactor. Ripe fruits; not detected in leaves and unripe fruit.

It catalyses the reaction L-histidine + H(+) = histamine + CO2. The chain is Histidine decarboxylase (HDC) from Solanum lycopersicum (Tomato).